The sequence spans 252 residues: Flap endonuclease Xni (252 aa).

A Mg(2+)-binding site is contributed by D105. The 5'-3' exonuclease domain occupies 161-251 (VESTQFIDYL…NVNLKQFRIE (91 aa)). K(+) is bound by residues L172, A173, P181, V183, and I186. Residues 185 to 190 (GIGPKS) form an interaction with DNA region.

This sequence belongs to the Xni family. It depends on Mg(2+) as a cofactor. The cofactor is K(+).

Has flap endonuclease activity. During DNA replication, flap endonucleases cleave the 5'-overhanging flap structure that is generated by displacement synthesis when DNA polymerase encounters the 5'-end of a downstream Okazaki fragment. The polypeptide is Flap endonuclease Xni (Shewanella halifaxensis (strain HAW-EB4)).